The sequence spans 77 residues: Acyl carrier protein (77 aa).

The 76-residue stretch at Ser-2–Gln-77 folds into the Carrier domain. O-(pantetheine 4'-phosphoryl)serine is present on Ser-37.

The protein belongs to the acyl carrier protein (ACP) family. 4'-phosphopantetheine is transferred from CoA to a specific serine of apo-ACP by AcpS. This modification is essential for activity because fatty acids are bound in thioester linkage to the sulfhydryl of the prosthetic group.

The protein localises to the cytoplasm. The protein operates within lipid metabolism; fatty acid biosynthesis. Its function is as follows. Carrier of the growing fatty acid chain in fatty acid biosynthesis. This chain is Acyl carrier protein, found in Leucothrix mucor.